The chain runs to 138 residues: Thyrotropin subunit beta (138 aa).

A signal peptide spans 1-20 (MTAIFLMSVLFGLACGQAMS). Intrachain disulfides connect Cys-22-Cys-72, Cys-36-Cys-87, Cys-39-Cys-125, Cys-47-Cys-103, Cys-51-Cys-105, and Cys-108-Cys-115. Asn-43 carries N-linked (GlcNAc...) asparagine glycosylation. Positions 133 to 138 (VVGLSI) are excised as a propeptide.

Belongs to the glycoprotein hormones subunit beta family. Heterodimer of a common alpha chain and a unique beta chain which confers biological specificity to thyrotropin, lutropin, follitropin and gonadotropin.

It is found in the secreted. Functionally, indispensable for the control of thyroid structure and metabolism. This Lama glama (Llama) protein is Thyrotropin subunit beta (TSHB).